Consider the following 146-residue polypeptide: Large ribosomal subunit protein bL9 (146 aa).

This sequence belongs to the bacterial ribosomal protein bL9 family.

Its function is as follows. Binds to the 23S rRNA. In Nautilia profundicola (strain ATCC BAA-1463 / DSM 18972 / AmH), this protein is Large ribosomal subunit protein bL9.